The primary structure comprises 233 residues: 5'-methylthioadenosine/S-adenosylhomocysteine nucleosidase (233 aa).

Residue Glu-12 is the Proton acceptor of the active site. Substrate-binding positions include Gly-78, Ile-156, and 177–178 (ME). Asp-201 acts as the Proton donor in catalysis.

This sequence belongs to the PNP/UDP phosphorylase family. MtnN subfamily.

It catalyses the reaction S-adenosyl-L-homocysteine + H2O = S-(5-deoxy-D-ribos-5-yl)-L-homocysteine + adenine. It carries out the reaction S-methyl-5'-thioadenosine + H2O = 5-(methylsulfanyl)-D-ribose + adenine. The enzyme catalyses 5'-deoxyadenosine + H2O = 5-deoxy-D-ribose + adenine. It participates in amino-acid biosynthesis; L-methionine biosynthesis via salvage pathway; S-methyl-5-thio-alpha-D-ribose 1-phosphate from S-methyl-5'-thioadenosine (hydrolase route): step 1/2. Catalyzes the irreversible cleavage of the glycosidic bond in both 5'-methylthioadenosine (MTA) and S-adenosylhomocysteine (SAH/AdoHcy) to adenine and the corresponding thioribose, 5'-methylthioribose and S-ribosylhomocysteine, respectively. Also cleaves 5'-deoxyadenosine, a toxic by-product of radical S-adenosylmethionine (SAM) enzymes, into 5-deoxyribose and adenine. The polypeptide is 5'-methylthioadenosine/S-adenosylhomocysteine nucleosidase (Listeria monocytogenes serotype 4a (strain HCC23)).